Consider the following 480-residue polypeptide: RAC-alpha serine/threonine-protein kinase (480 aa).

One can recognise a PH domain in the interval 5–108; it reads AIVKEGWLHK…WTTAIQTVAD (104 aa). N6-acetyllysine is present on residues Lys14 and Lys20. A 1D-myo-inositol 1,3,4,5-tetrakisphosphate-binding site is contributed by 14–19; that stretch reads KRGEYI. Residues 23–25 and Asn53 each bind 1D-myo-inositol 1,3,4,5-tetrakisphosphate; that span reads RPR. The cysteines at positions 60 and 77 are disulfide-linked. Arg86 contacts 1D-myo-inositol 1,3,4,5-tetrakisphosphate. Ser124 bears the Phosphoserine mark. A Phosphoserine; alternate modification is found at Ser129. Ser129 carries an O-linked (GlcNAc) serine; alternate glycan. The region spanning 150–408 is the Protein kinase domain; it reads FEYLKLLGKG…AKEIMQHRFF (259 aa). 156-164 contributes to the ATP binding site; that stretch reads LGKGTFGKV. A Phosphotyrosine; by TNK2 modification is found at Tyr176. Residue Lys179 coordinates ATP. The active-site Proton acceptor is Asp274. Lys284 is covalently cross-linked (Glycyl lysine isopeptide (Lys-Gly) (interchain with G-Cter in ubiquitin)). A disulfide bridge connects residues Cys296 and Cys310. Thr305 is a glycosylation site (O-linked (GlcNAc) threonine). A Phosphothreonine; by PDPK1 modification is found at Thr308. A glycan (O-linked (GlcNAc) threonine) is linked at Thr312. Positions 409 to 480 constitute an AGC-kinase C-terminal domain; it reads ASIVWQDVYE…QFSYSASATA (72 aa). Residue Thr448 is modified to Phosphothreonine. The residue at position 450 (Thr450) is a Phosphothreonine; by MTOR. A disordered region spans residues 450-480; sequence TPPDQDDSMEGVDSERRPHFPQFSYSASATA. Ser473 carries O-linked (GlcNAc) serine; alternate glycosylation. Residue Ser473 is modified to Phosphoserine; by MTOR; alternate. The residue at position 474 (Tyr474) is a Phosphotyrosine. The residue at position 477 (Ser477) is a Phosphoserine. Thr479 carries the post-translational modification Phosphothreonine.

This sequence belongs to the protein kinase superfamily. AGC Ser/Thr protein kinase family. RAC subfamily. In terms of assembly, interacts (via the C-terminus) with CCDC88A (via its C-terminus) and THEM4 (via its C-terminus). Interacts with AKTIP. Interacts (via PH domain) with MTCP1, TCL1A and TCL1B. Interacts with TRAF6. Interacts with GRB10; the interaction leads to GRB10 phosphorylation thus promoting YWHAE binding. Interacts with RARA; the interaction phosphorylates RARA and represses its transactivation activity. Interacts with MAP3K5 and TNK2. Interacts with BAD, CLK2, PPP2R5B, STK3 and STK4. Interacts (via PH domain) with SIRT1. Interacts with SRPK2 in a phosphorylation-dependent manner. Interacts with RAF1. Interacts with PKN2 (via C-terminal domain); the interaction occurs with the C-terminus cleavage products of PKN2 in apoptotic cells. Interacts with TRIM13; the interaction ubiquitinates AKT1 leading to its proteasomal degradation. Interacts with and phosphorylated by PDPK1. Interacts with BTBD10. Interacts with KCTD20. Interacts with PA2G4. Interacts with PA2G4. Interacts with KIF14; the interaction is detected in the plasma membrane upon INS stimulation and promotes AKT1 phosphorylation. Interacts with FAM83B; activates the PI3K/AKT signaling cascade. Interacts with WDFY2 (via WD repeats 1-3). Forms a complex with WDFY2 and FOXO1. Interacts with FAM168A. Interacts with SYAP1 (via phosphorylated form and BSD domain); this interaction is enhanced in a mTORC2-mediated manner in response to epidermal growth factor (EGF) stimulation and activates AKT1. Interacts with PKHM3. Interacts with FKBP5/FKBP51; promoting interaction between Akt/AKT1 and PHLPP1, thereby enhancing dephosphorylation and subsequent activation of Akt/AKT1. Interacts with TMEM175; leading to formation of the lysoK(GF) complex. O-GlcNAcylation at Thr-305 and Thr-312 inhibits activating phosphorylation at Thr-308 via disrupting the interaction between AKT1 and PDPK1. O-GlcNAcylation at Ser-473 also probably interferes with phosphorylation at this site. In terms of processing, phosphorylation on Thr-308, Ser-473 and Tyr-474 is required for full activity. Phosphorylation of the activation loop at Thr-308 by PDPK1/PDK1 is a prerequisite for full activation. Phosphorylation by mTORC2 in response to growth factors plays a key role in AKT1 activation: mTORC2 phosphorylates different sites depending on the context, such as Thr-450, Ser-473, Ser-477 or Thr-479, thereby facilitating subsequent phosphorylation of the activation loop by PDPK1/PDK1. Phosphorylation at Ser-473 by mTORC2 promotes ubiquitination and degradation by the proteasome. Also phosphorylated at Ser-477 and Thr-479 by CDK2, facilitating subsequent phosphorylation of the activation loop by PDPK1/PDK1. Activated TNK2 phosphorylates it on Tyr-176 resulting in its binding to the anionic plasma membrane phospholipid PA. This phosphorylated form localizes to the cell membrane, where it is targeted by PDPK1 and PDPK2 for further phosphorylations on Thr-308 and Ser-473 leading to its activation. Phosphorylated at Thr-308 and Ser-473 by IKBKE and TBK1. Ser-473 phosphorylation is enhanced by interaction with AGAP2 isoform 2 (PIKE-A). Ser-473 phosphorylation is enhanced by signaling through activated FLT3. Ser-473 is dephosphorylated by PHLPP. Dephosphorylated at Thr-308 and Ser-473 by PP2A phosphatase. The phosphorylated form of PPP2R5B is required for bridging AKT1 with PP2A phosphatase. Ser-473 is dephosphorylated by CPPED1, leading to termination of signaling. AIM2 acts as an inhibitor of AKT1 by inhibiting phosphorylation Ser-473: AIM2 acts both by inhibiting the activity of PRKDC/DNA-PK kinase and promoting dephosphorylation by PP2A phosphatase. Post-translationally, ubiquitinated; undergoes both 'Lys-48'- and 'Lys-63'-linked polyubiquitination. TRAF6-induced 'Lys-63'-linked AKT1 ubiquitination is critical for phosphorylation and activation. When ubiquitinated, it translocates to the plasma membrane, where it becomes phosphorylated. When fully phosphorylated and translocated into the nucleus, undergoes 'Lys-48'-polyubiquitination catalyzed by TTC3, leading to its degradation by the proteasome. Ubiquitinated via 'Lys-48'-linked polyubiquitination by ZNRF1, leading to its degradation by the proteasome. Also ubiquitinated by TRIM13 leading to its proteasomal degradation. Phosphorylated, undergoes 'Lys-48'-linked polyubiquitination preferentially at Lys-284 catalyzed by MUL1, leading to its proteasomal degradation. Acetylated on Lys-14 and Lys-20 by the histone acetyltransferases EP300 and KAT2B. Acetylation results in reduced phosphorylation and inhibition of activity. Deacetylated at Lys-14 and Lys-20 by SIRT1. SIRT1-mediated deacetylation relieves the inhibition. In terms of processing, cleavage by caspase-3/CASP3. Cleaved at the caspase-3 consensus site Asp-462 during apoptosis, resulting in down-regulation of the AKT signaling pathway and decreased cell survival.

The protein resides in the cytoplasm. It localises to the nucleus. Its subcellular location is the cell membrane. The protein localises to the mitochondrion intermembrane space. The enzyme catalyses L-seryl-[protein] + ATP = O-phospho-L-seryl-[protein] + ADP + H(+). The catalysed reaction is L-threonyl-[protein] + ATP = O-phospho-L-threonyl-[protein] + ADP + H(+). Its function is as follows. AKT1 is one of 3 closely related serine/threonine-protein kinases (AKT1, AKT2 and AKT3) called the AKT kinase, and which regulate many processes including metabolism, proliferation, cell survival, growth and angiogenesis. This is mediated through serine and/or threonine phosphorylation of a range of downstream substrates. Over 100 substrate candidates have been reported so far, but for most of them, no isoform specificity has been reported. AKT is responsible of the regulation of glucose uptake by mediating insulin-induced translocation of the SLC2A4/GLUT4 glucose transporter to the cell surface. Phosphorylation of PTPN1 at 'Ser-50' negatively modulates its phosphatase activity preventing dephosphorylation of the insulin receptor and the attenuation of insulin signaling. Phosphorylation of TBC1D4 triggers the binding of this effector to inhibitory 14-3-3 proteins, which is required for insulin-stimulated glucose transport. AKT also regulates the storage of glucose in the form of glycogen by phosphorylating GSK3A at 'Ser-21' and GSK3B at 'Ser-9', resulting in inhibition of its kinase activity. Phosphorylation of GSK3 isoforms by AKT is also thought to be one mechanism by which cell proliferation is driven. AKT also regulates cell survival via the phosphorylation of MAP3K5 (apoptosis signal-related kinase). Phosphorylation of 'Ser-83' decreases MAP3K5 kinase activity stimulated by oxidative stress and thereby prevents apoptosis. AKT mediates insulin-stimulated protein synthesis by phosphorylating TSC2 at 'Ser-939' and 'Thr-1462', thereby activating the mTORC1 signaling pathway, and leading to both phosphorylation of 4E-BP1 and in activation of RPS6KB1. Also regulates the mTORC1 signaling pathway by catalyzing phosphorylation of CASTOR1 and DEPDC5. AKT plays a role as key modulator of the AKT-mTOR signaling pathway controlling the tempo of the process of newborn neurons integration during adult neurogenesis, including correct neuron positioning, dendritic development and synapse formation. Part of a positive feedback loop of mTORC2 signaling by mediating phosphorylation of MAPKAP1/SIN1, promoting mTORC2 activation. AKT is involved in the phosphorylation of members of the FOXO factors (Forkhead family of transcription factors), leading to binding of 14-3-3 proteins and cytoplasmic localization. In particular, FOXO1 is phosphorylated at 'Thr-24', 'Ser-256' and 'Ser-319'. FOXO3 and FOXO4 are phosphorylated on equivalent sites. AKT has an important role in the regulation of NF-kappa-B-dependent gene transcription and positively regulates the activity of CREB1 (cyclic AMP (cAMP)-response element binding protein). The phosphorylation of CREB1 induces the binding of accessory proteins that are necessary for the transcription of pro-survival genes such as BCL2 and MCL1. AKT phosphorylates 'Ser-454' on ATP citrate lyase (ACLY), thereby potentially regulating ACLY activity and fatty acid synthesis. Activates the 3B isoform of cyclic nucleotide phosphodiesterase (PDE3B) via phosphorylation of 'Ser-273', resulting in reduced cyclic AMP levels and inhibition of lipolysis. Phosphorylates PIKFYVE on 'Ser-318', which results in increased PI(3)P-5 activity. The Rho GTPase-activating protein DLC1 is another substrate and its phosphorylation is implicated in the regulation cell proliferation and cell growth. Signals downstream of phosphatidylinositol 3-kinase (PI(3)K) to mediate the effects of various growth factors such as platelet-derived growth factor (PDGF), epidermal growth factor (EGF), insulin and insulin-like growth factor 1 (IGF1). AKT mediates the antiapoptotic effects of IGF1. Essential for the SPATA13-mediated regulation of cell migration and adhesion assembly and disassembly. May be involved in the regulation of the placental development. Phosphorylates STK4/MST1 at 'Thr-120' and 'Thr-387' leading to inhibition of its: kinase activity, nuclear translocation, autophosphorylation and ability to phosphorylate FOXO3. Phosphorylates STK3/MST2 at 'Thr-117' and 'Thr-384' leading to inhibition of its: cleavage, kinase activity, autophosphorylation at Thr-180, binding to RASSF1 and nuclear translocation. Phosphorylates SRPK2 and enhances its kinase activity towards SRSF2 and ACIN1 and promotes its nuclear translocation. Phosphorylates RAF1 at 'Ser-259' and negatively regulates its activity. Phosphorylation of BAD stimulates its pro-apoptotic activity. Phosphorylates KAT6A at 'Thr-369' and this phosphorylation inhibits the interaction of KAT6A with PML and negatively regulates its acetylation activity towards p53/TP53. Phosphorylates palladin (PALLD), modulating cytoskeletal organization and cell motility. Phosphorylates prohibitin (PHB), playing an important role in cell metabolism and proliferation. Phosphorylates CDKN1A, for which phosphorylation at 'Thr-145' induces its release from CDK2 and cytoplasmic relocalization. These recent findings indicate that the AKT1 isoform has a more specific role in cell motility and proliferation. Phosphorylates CLK2 thereby controlling cell survival to ionizing radiation. Phosphorylates PCK1 at 'Ser-90', reducing the binding affinity of PCK1 to oxaloacetate and changing PCK1 into an atypical protein kinase activity using GTP as donor. Also acts as an activator of TMEM175 potassium channel activity in response to growth factors: forms the lysoK(GF) complex together with TMEM175 and acts by promoting TMEM175 channel activation, independently of its protein kinase activity. Acts as a negative regulator of the cGAS-STING pathway by mediating phosphorylation of CGAS during mitosis, leading to its inhibition. Acts as a regulator of mitochondrial calcium uptake by mediating phosphorylation of MICU1 in the mitochondrial intermembrane space, impairing MICU1 maturation. Acts as an inhibitor of tRNA methylation by mediating phosphorylation of the N-terminus of METTL1, thereby inhibiting METTL1 methyltransferase activity. In response to LPAR1 receptor pathway activation, phosphorylates Rabin8/RAB3IP which alters its activity and phosphorylates WDR44 which induces WDR44 binding to Rab11, thereby switching Rab11 vesicular function from preciliary trafficking to endocytic recycling. The polypeptide is RAC-alpha serine/threonine-protein kinase (AKT1) (Bos taurus (Bovine)).